Consider the following 644-residue polypeptide: Zinc finger protein 74 (644 aa).

A KRAB domain is found at 43–114 (VSFKDVAVDF…QREVPRGPCP (72 aa)). 12 consecutive C2H2-type zinc fingers follow at residues 248-270 (FVCGECGKAFRQSSSLTLHRRWH), 276-298 (YKCDECGKAFTWSTNLLEHRRIH), 304-326 (FFCGECGKAFSCHSSLNVHQRIH), 332-354 (YKCSACEKAFSCSSLLSMHLRVH), 360-382 (YRCGECGKAFNQRTHLTRHHRIH), 388-410 (YQCGSCGKAFTCHSSLTVHEKIH), 416-438 (FKCSDCEKAFNSRSRLTLHQRTH), 444-466 (FKCADCGKGFSCHAYLLVHRRIH), 472-494 (FKCNECGKAFSSHAYLIVHRRIH), 500-522 (FDCSQCWKAFSCHSSLIVHQRIH), 528-550 (YKCSECGRAFSQNHCLIKHQKIH), and 556-578 (FKCEKCGEMFNWSSHLTEHQRLH). Lysine 582 participates in a covalent cross-link: Glycyl lysine isopeptide (Lys-Gly) (interchain with G-Cter in SUMO2).

This sequence belongs to the krueppel C2H2-type zinc-finger protein family. In terms of tissue distribution, highly expressed in the fetal brain.

The protein resides in the nucleus. Functionally, may play a role in RNA metabolism. In Homo sapiens (Human), this protein is Zinc finger protein 74 (ZNF74).